Here is a 284-residue protein sequence, read N- to C-terminus: 4-diphosphocytidyl-2-C-methyl-D-erythritol kinase (284 aa).

Lys14 is an active-site residue. Position 98–108 (98–108 (PMGGGLGGGSS)) interacts with ATP. Residue Asp140 is part of the active site.

Belongs to the GHMP kinase family. IspE subfamily.

The enzyme catalyses 4-CDP-2-C-methyl-D-erythritol + ATP = 4-CDP-2-C-methyl-D-erythritol 2-phosphate + ADP + H(+). It functions in the pathway isoprenoid biosynthesis; isopentenyl diphosphate biosynthesis via DXP pathway; isopentenyl diphosphate from 1-deoxy-D-xylulose 5-phosphate: step 3/6. Functionally, catalyzes the phosphorylation of the position 2 hydroxy group of 4-diphosphocytidyl-2C-methyl-D-erythritol. In Shewanella piezotolerans (strain WP3 / JCM 13877), this protein is 4-diphosphocytidyl-2-C-methyl-D-erythritol kinase.